Consider the following 159-residue polypeptide: Endoribonuclease YbeY (159 aa).

Residues histidine 125, histidine 129, and histidine 135 each contribute to the Zn(2+) site.

The protein belongs to the endoribonuclease YbeY family. The cofactor is Zn(2+).

It is found in the cytoplasm. Its function is as follows. Single strand-specific metallo-endoribonuclease involved in late-stage 70S ribosome quality control and in maturation of the 3' terminus of the 16S rRNA. This Thermoanaerobacter pseudethanolicus (strain ATCC 33223 / 39E) (Clostridium thermohydrosulfuricum) protein is Endoribonuclease YbeY.